The following is a 273-amino-acid chain: 3-methyl-2-oxobutanoate hydroxymethyltransferase (273 aa).

The Mg(2+) site is built by D53 and D92. Residues 53–54 (DS), D92, and K122 contribute to the 3-methyl-2-oxobutanoate site. Residue E124 participates in Mg(2+) binding. The Proton acceptor role is filled by E191.

It belongs to the PanB family. In terms of assembly, homodecamer; pentamer of dimers. Mg(2+) serves as cofactor.

The protein resides in the cytoplasm. It catalyses the reaction 3-methyl-2-oxobutanoate + (6R)-5,10-methylene-5,6,7,8-tetrahydrofolate + H2O = 2-dehydropantoate + (6S)-5,6,7,8-tetrahydrofolate. Its pathway is cofactor biosynthesis; (R)-pantothenate biosynthesis; (R)-pantoate from 3-methyl-2-oxobutanoate: step 1/2. Catalyzes the reversible reaction in which hydroxymethyl group from 5,10-methylenetetrahydrofolate is transferred onto alpha-ketoisovalerate to form ketopantoate. The polypeptide is 3-methyl-2-oxobutanoate hydroxymethyltransferase (Porphyromonas gingivalis (strain ATCC 33277 / DSM 20709 / CIP 103683 / JCM 12257 / NCTC 11834 / 2561)).